The following is a 508-amino-acid chain: ATP synthase subunit alpha, chloroplastic (508 aa).

Residue G171 to T178 participates in ATP binding.

This sequence belongs to the ATPase alpha/beta chains family. In terms of assembly, F-type ATPases have 2 components, CF(1) - the catalytic core - and CF(0) - the membrane proton channel. CF(1) has five subunits: alpha(3), beta(3), gamma(1), delta(1), epsilon(1). CF(0) has four main subunits: a, b, b' and c.

It localises to the plastid. The protein localises to the chloroplast thylakoid membrane. The enzyme catalyses ATP + H2O + 4 H(+)(in) = ADP + phosphate + 5 H(+)(out). Its function is as follows. Produces ATP from ADP in the presence of a proton gradient across the membrane. The alpha chain is a regulatory subunit. The polypeptide is ATP synthase subunit alpha, chloroplastic (Gnetum parvifolium (Small-leaved jointfir)).